Consider the following 264-residue polypeptide: AA9 family lytic polysaccharide monooxygenase A (264 aa).

An N-terminal signal peptide occupies residues 1 to 18; that stretch reads MHFAALAILSSLVASAAA. Position 19 (histidine 19) interacts with Cu(2+). Residues asparagine 51 and asparagine 75 are each glycosylated (N-linked (GlcNAc...) asparagine). Cysteines 59 and 182 form a disulfide. Residue histidine 96 participates in Cu(2+) binding. A glycan (N-linked (GlcNAc...) asparagine) is linked at asparagine 110. Histidine 162 is an O2 binding site. Tyrosine 179 provides a ligand contact to Cu(2+). Asparagine 218 and asparagine 251 each carry an N-linked (GlcNAc...) asparagine glycan.

This sequence belongs to the polysaccharide monooxygenase AA9 family. Cu(2+) serves as cofactor.

The protein resides in the secreted. It catalyses the reaction [(1-&gt;4)-beta-D-glucosyl]n+m + reduced acceptor + O2 = 4-dehydro-beta-D-glucosyl-[(1-&gt;4)-beta-D-glucosyl]n-1 + [(1-&gt;4)-beta-D-glucosyl]m + acceptor + H2O.. Lytic polysaccharide monooxygenase (LPMO) that depolymerizes crystalline and amorphous polysaccharides via the oxidation of scissile alpha- or beta-(1-4)-glycosidic bonds, yielding C4 oxidation products. Catalysis by LPMOs requires the reduction of the active-site copper from Cu(II) to Cu(I) by a reducing agent and H(2)O(2) or O(2) as a cosubstrate. Active on cellulose and cello-oligosaccharides, as well as plant cell wall-derived hemicellulosic polysaccharides. Also active on cello-oligosaccharides such as cellohexaose, cellopentaose or cellotetraose. In Phanerochaete carnosa (strain HHB-10118-sp) (White-rot fungus), this protein is AA9 family lytic polysaccharide monooxygenase A.